The primary structure comprises 105 residues: Heat shock protein HspQ (105 aa).

The protein belongs to the HspQ family.

Its subcellular location is the cytoplasm. In terms of biological role, involved in the degradation of certain denaturated proteins, including DnaA, during heat shock stress. The protein is Heat shock protein HspQ of Salmonella choleraesuis (strain SC-B67).